The chain runs to 239 residues: 1-(5-phosphoribosyl)-5-[(5-phosphoribosylamino)methylideneamino] imidazole-4-carboxamide isomerase (239 aa).

Aspartate 8 serves as the catalytic Proton acceptor. The active-site Proton donor is the aspartate 129.

Belongs to the HisA/HisF family.

The protein resides in the cytoplasm. The catalysed reaction is 1-(5-phospho-beta-D-ribosyl)-5-[(5-phospho-beta-D-ribosylamino)methylideneamino]imidazole-4-carboxamide = 5-[(5-phospho-1-deoxy-D-ribulos-1-ylimino)methylamino]-1-(5-phospho-beta-D-ribosyl)imidazole-4-carboxamide. It participates in amino-acid biosynthesis; L-histidine biosynthesis; L-histidine from 5-phospho-alpha-D-ribose 1-diphosphate: step 4/9. The sequence is that of 1-(5-phosphoribosyl)-5-[(5-phosphoribosylamino)methylideneamino] imidazole-4-carboxamide isomerase from Roseobacter denitrificans (strain ATCC 33942 / OCh 114) (Erythrobacter sp. (strain OCh 114)).